We begin with the raw amino-acid sequence, 193 residues long: Ion-translocating oxidoreductase complex subunit A (193 aa).

A run of 6 helical transmembrane segments spans residues 5-25 (ILFFISNILIENFILVKFLGL), 47-67 (FVILTSSVLLWCVNFFILLPL), 72-92 (LRIIAYMLIVSVSVQFLEIVL), 102-122 (LLGIFLPLITTNCTVLAIPLF), 134-154 (IFYGLSASLGFALVMIIFSCI), and 167-187 (FQGAPIILITVSLISITFMGF).

Belongs to the NqrDE/RnfAE family. In terms of assembly, the complex is composed of six subunits: RnfA, RnfB, RnfC, RnfD, RnfE and RnfG.

The protein resides in the cell inner membrane. Part of a membrane-bound complex that couples electron transfer with translocation of ions across the membrane. The sequence is that of Ion-translocating oxidoreductase complex subunit A from Buchnera aphidicola subsp. Acyrthosiphon pisum (strain APS) (Acyrthosiphon pisum symbiotic bacterium).